A 470-amino-acid chain; its full sequence is Argininosuccinate lyase (470 aa).

This sequence belongs to the lyase 1 family. Argininosuccinate lyase subfamily.

It localises to the cytoplasm. The enzyme catalyses 2-(N(omega)-L-arginino)succinate = fumarate + L-arginine. It functions in the pathway amino-acid biosynthesis; L-arginine biosynthesis; L-arginine from L-ornithine and carbamoyl phosphate: step 3/3. The sequence is that of Argininosuccinate lyase from Mycolicibacterium gilvum (strain PYR-GCK) (Mycobacterium gilvum (strain PYR-GCK)).